A 490-amino-acid polypeptide reads, in one-letter code: Cytochrome P450 71B28 (490 aa).

A helical transmembrane segment spans residues 1 to 21; it reads MSVFLCFLCLLPLILIFLKNL. A heme-binding site is contributed by cysteine 440.

Belongs to the cytochrome P450 family. Heme serves as cofactor.

The protein localises to the membrane. This chain is Cytochrome P450 71B28 (CYP71B28), found in Arabidopsis thaliana (Mouse-ear cress).